The following is a 166-amino-acid chain: Interferon gamma (166 aa).

The N-terminal stretch at M1 to G23 is a signal peptide. Q24 bears the Pyrrolidone carboxylic acid mark. Residues N39 and N106 are each glycosylated (N-linked (GlcNAc...) asparagine).

It belongs to the type II (or gamma) interferon family. Homodimer. Interacts with IFNGR1 (via extracellular domain); this interaction promotes IFNGR1 dimerization. Released primarily from activated T lymphocytes.

It localises to the secreted. Type II interferon produced by immune cells such as T-cells and NK cells that plays crucial roles in antimicrobial, antiviral, and antitumor responses by activating effector immune cells and enhancing antigen presentation. Primarily signals through the JAK-STAT pathway after interaction with its receptor IFNGR1 to affect gene regulation. Upon IFNG binding, IFNGR1 intracellular domain opens out to allow association of downstream signaling components JAK2, JAK1 and STAT1, leading to STAT1 activation, nuclear translocation and transcription of IFNG-regulated genes. Many of the induced genes are transcription factors such as IRF1 that are able to further drive regulation of a next wave of transcription. Plays a role in class I antigen presentation pathway by inducing a replacement of catalytic proteasome subunits with immunoproteasome subunits. In turn, increases the quantity, quality, and repertoire of peptides for class I MHC loading. Increases the efficiency of peptide generation also by inducing the expression of activator PA28 that associates with the proteasome and alters its proteolytic cleavage preference. Up-regulates as well MHC II complexes on the cell surface by promoting expression of several key molecules such as cathepsins B/CTSB, H/CTSH, and L/CTSL. Participates in the regulation of hematopoietic stem cells during development and under homeostatic conditions by affecting their development, quiescence, and differentiation. The protein is Interferon gamma (IFNG) of Ovis aries (Sheep).